The following is a 469-amino-acid chain: 3-isopropylmalate dehydratase large subunit (469 aa).

[4Fe-4S] cluster contacts are provided by cysteine 347, cysteine 408, and cysteine 411.

It belongs to the aconitase/IPM isomerase family. LeuC type 1 subfamily. In terms of assembly, heterodimer of LeuC and LeuD. [4Fe-4S] cluster is required as a cofactor.

It carries out the reaction (2R,3S)-3-isopropylmalate = (2S)-2-isopropylmalate. It participates in amino-acid biosynthesis; L-leucine biosynthesis; L-leucine from 3-methyl-2-oxobutanoate: step 2/4. Catalyzes the isomerization between 2-isopropylmalate and 3-isopropylmalate, via the formation of 2-isopropylmaleate. The protein is 3-isopropylmalate dehydratase large subunit of Actinobacillus succinogenes (strain ATCC 55618 / DSM 22257 / CCUG 43843 / 130Z).